The primary structure comprises 186 residues: ADP-ribosylation factor-like protein 6 (186 aa).

A lipid anchor (N-myristoyl glycine) is attached at Gly2. GTP-binding positions include 24 to 31 (GLDNSGKT), Thr50, 69 to 73 (DMSGQ), Gly72, 130 to 133 (NKMD), and Ala164. Position 50 (Thr50) interacts with Mg(2+).

Belongs to the small GTPase superfamily. Arf family. In terms of assembly, interacts with SEC61B, ARL6IP1, ARL6IP2, ARL6IP3, ARL6IP4 ARL6IP5 and ARL6IP6. Interacts (GTP-bound form) with the BBSome a complex that contains BBS1, BBS2, BBS4, BBS5, BBS7, BBS8/TTC8, BBS9 and BBIP10. Interacts (GTP-free form) with IFT27.

The protein resides in the cell projection. The protein localises to the cilium membrane. It is found in the cytoplasm. Its subcellular location is the cytoskeleton. It localises to the cilium axoneme. The protein resides in the cilium basal body. Its function is as follows. Involved in membrane protein trafficking at the base of the ciliary organelle. Mediates recruitment onto plasma membrane of the BBSome complex which would constitute a coat complex required for sorting of specific membrane proteins to the primary cilia. Together with the BBSome complex and LTZL1, controls SMO ciliary trafficking and contributes to the sonic hedgehog (SHH) pathway regulation. May regulate cilia assembly and disassembly and subsequent ciliary signaling events such as the Wnt signaling cascade. Isoform 2 may be required for proper retinal function and organization. In Pongo abelii (Sumatran orangutan), this protein is ADP-ribosylation factor-like protein 6 (ARL6).